The following is a 284-amino-acid chain: RNase adapter protein RapZ (284 aa).

Residue 8–15 (GRSGSGKS) participates in ATP binding. Residue 56 to 59 (DVRN) coordinates GTP. Positions 266–284 (RSRGKNVQSRHRTLEKRKT) are RNA-binding.

Belongs to the RapZ-like family. RapZ subfamily. In terms of assembly, homotrimer.

Functionally, modulates the synthesis of GlmS, by affecting the processing and stability of the regulatory small RNA GlmZ. When glucosamine-6-phosphate (GlcN6P) concentrations are high in the cell, RapZ binds GlmZ and targets it to cleavage by RNase E. Consequently, GlmZ is inactivated and unable to activate GlmS synthesis. Under low GlcN6P concentrations, RapZ is sequestered and inactivated by an other regulatory small RNA, GlmY, preventing GlmZ degradation and leading to synthesis of GlmS. This chain is RNase adapter protein RapZ, found in Salmonella arizonae (strain ATCC BAA-731 / CDC346-86 / RSK2980).